The following is a 341-amino-acid chain: Muscleblind-like protein 1 (341 aa).

Threonine 6 carries the post-translational modification Phosphothreonine. C3H1-type zinc fingers lie at residues 13-41 (WLTL…HPSK), 47-73 (NGRV…HPPP), 178-206 (TDRL…HPAD), and 214-240 (DNTV…HPPA).

This sequence belongs to the muscleblind family. As to quaternary structure, interacts with DDX1 and YBX1. Interacts with HNRNPH1; the interaction in RNA-independent. Interacts with RBPMS; the interaction allows cooperative assembly of RNA-bound stable cell-specific alternative splicing regulatory complexes. Highly expressed in cardiac and skeletal muscle. Weakly expressed in heart and eye (at protein level).

The protein localises to the nucleus. Its subcellular location is the cytoplasm. It localises to the cytoplasmic granule. In terms of biological role, mediates pre-mRNA alternative splicing regulation. Acts either as activator or repressor of splicing on specific pre-mRNA targets. Inhibits cardiac troponin-T (TNNT2) pre-mRNA exon inclusion but induces insulin receptor (IR) pre-mRNA exon inclusion in muscle. Antagonizes the alternative splicing activity pattern of CELF proteins. Regulates the TNNT2 exon 5 skipping through competition with U2AF2. Inhibits the formation of the spliceosome A complex on intron 4 of TNNT2 pre-mRNA. Binds to the stem-loop structure within the polypyrimidine tract of TNNT2 intron 4 during spliceosome assembly. Binds to the 5'-YGCU(U/G)Y-3'consensus sequence. Binds to the IR RNA. Binds to CUG triplet repeat expansion in myotonic dystrophy muscle cells by sequestering the target RNAs. Together with RNA binding proteins RBPMS and RBFOX2, activates vascular smooth muscle cells alternative splicing events. Regulates NCOR2 alternative splicing. This chain is Muscleblind-like protein 1 (Mbnl1), found in Mus musculus (Mouse).